The chain runs to 467 residues: Pancreatic lipase-related protein 3 (467 aa).

The N-terminal stretch at 1 to 17 (MLGIWIVAFLFFGTSRG) is a signal peptide. A disulfide bridge connects residues cysteine 21 and cysteine 27. N-linked (GlcNAc...) asparagine glycosylation is present at asparagine 74. A disulfide bridge links cysteine 107 with cysteine 118. Asparagine 125 carries an N-linked (GlcNAc...) asparagine glycan. Serine 168 (nucleophile) is an active-site residue. Aspartate 191 (charge relay system) is an active-site residue. A disulfide bond links cysteine 252 and cysteine 277. Histidine 279 functions as the Charge relay system in the catalytic mechanism. 3 cysteine pairs are disulfide-bonded: cysteine 301–cysteine 312, cysteine 315–cysteine 320, and cysteine 451–cysteine 467. A PLAT domain is found at 355–467 (WRHKLSVKLS…PNILQNLKPC (113 aa)).

It belongs to the AB hydrolase superfamily. Lipase family. As to expression, overexpressed in hepatocellular carcinoma.

The protein localises to the secreted. It catalyses the reaction a triacylglycerol + H2O = a diacylglycerol + a fatty acid + H(+). The polypeptide is Pancreatic lipase-related protein 3 (PNLIPRP3) (Homo sapiens (Human)).